Reading from the N-terminus, the 225-residue chain is Single-pass membrane and coiled-coil domain-containing protein 3 (225 aa).

Residues 62 to 92 (IKENCDLIIQAIMKIQKELQKVDEALKDKLE) are a coiled coil. Residues 155–175 (IGASLLGSIGVAVLGLGIDMI) traverse the membrane as a helical segment. Residues 183 to 207 (VEKTQLQAAIKSYEKHLVEFKSASE) are a coiled coil.

The protein resides in the membrane. In Homo sapiens (Human), this protein is Single-pass membrane and coiled-coil domain-containing protein 3 (SMCO3).